The chain runs to 238 residues: 1-(5-phosphoribosyl)-5-[(5-phosphoribosylamino)methylideneamino] imidazole-4-carboxamide isomerase (238 aa).

The Proton acceptor role is filled by D8. Catalysis depends on D130, which acts as the Proton donor.

It belongs to the HisA/HisF family.

The protein resides in the cytoplasm. It catalyses the reaction 1-(5-phospho-beta-D-ribosyl)-5-[(5-phospho-beta-D-ribosylamino)methylideneamino]imidazole-4-carboxamide = 5-[(5-phospho-1-deoxy-D-ribulos-1-ylimino)methylamino]-1-(5-phospho-beta-D-ribosyl)imidazole-4-carboxamide. It participates in amino-acid biosynthesis; L-histidine biosynthesis; L-histidine from 5-phospho-alpha-D-ribose 1-diphosphate: step 4/9. This chain is 1-(5-phosphoribosyl)-5-[(5-phosphoribosylamino)methylideneamino] imidazole-4-carboxamide isomerase, found in Methanococcus vannielii (strain ATCC 35089 / DSM 1224 / JCM 13029 / OCM 148 / SB).